Consider the following 405-residue polypeptide: Endo-1,4-beta-xylanase 5 (405 aa).

The first 22 residues, 1-22, serve as a signal peptide directing secretion; it reads MTRLATLITLAGLLAVSPGAYA. N-linked (GlcNAc...) asparagine glycans are attached at residues Asn27 and Asn69. A GH10 domain is found at 32–352; it reads STGAEGLNSL…KPAYTSVSSL (321 aa). Glu166 acts as the Proton donor in catalysis. Residue Asn171 is glycosylated (N-linked (GlcNAc...) asparagine). Glu273 serves as the catalytic Nucleophile. Cys302 and Cys308 form a disulfide bridge. Gly380 carries GPI-anchor amidated glycine lipidation. Positions 381 to 405 are cleaved as a propeptide — removed in mature form; sequence AGRETVSIAGLTLALSSLAFGMFML.

It belongs to the glycosyl hydrolase 10 (cellulase F) family.

Its subcellular location is the cell membrane. The protein resides in the secreted. It carries out the reaction Endohydrolysis of (1-&gt;4)-beta-D-xylosidic linkages in xylans.. It functions in the pathway glycan degradation; xylan degradation. Its function is as follows. Endo-1,4-beta-xylanase involved in the hydrolysis of xylan, a major structural heterogeneous polysaccharide found in plant biomass representing the second most abundant polysaccharide in the biosphere, after cellulose. The sequence is that of Endo-1,4-beta-xylanase 5 (XYL5) from Pyricularia grisea (Crabgrass-specific blast fungus).